The chain runs to 315 residues: Olfactory receptor 10H5 (315 aa).

Topologically, residues 1 to 25 (MQGLNHTSVSEFILVGFSAFPHLQL) are extracellular. N-linked (GlcNAc...) asparagine glycosylation is present at N5. Residues 26 to 46 (MLFLLFLLMYLFTLLGNLLIM) form a helical membrane-spanning segment. Topologically, residues 47–54 (ATVWSERS) are cytoplasmic. Residues 55-75 (LHMPMYLFLCALSITEILYTV) form a helical membrane-spanning segment. Topologically, residues 76-99 (AIIPRMLADLLSTQRSIAFLACAS) are extracellular. A disulfide bond links C97 and C189. The helical transmembrane segment at 100–120 (QMFFSFSFGFTHSFLLTVMGY) threads the bilayer. Topologically, residues 121–139 (DRYVAICHPLRYNVLMSLR) are cytoplasmic. The helical transmembrane segment at 140–160 (GCTCRVGCSWAGGLVMGMVVT) threads the bilayer. The Extracellular portion of the chain corresponds to 161 to 197 (SAIFHLAFCGHKEIHHFFCHVPPLLKLACGDDVLVVA). Residues 198-218 (KGVGLVCITALLGCFLLILLS) traverse the membrane as a helical segment. Over 219-238 (YAFIVAAILKIPSAEGRNKA) the chain is Cytoplasmic. Residues 239–259 (FSTCASHLTVVVVHYGFASVI) form a helical membrane-spanning segment. Residues 260–272 (YLKPKGPQSPEGD) lie on the Extracellular side of the membrane. A helical transmembrane segment spans residues 273–293 (TLMGITYTVLTPFLSPIIFSL). At 294–315 (RNKELKVAMKKTCFTKLFPQNC) the chain is on the cytoplasmic side.

It belongs to the G-protein coupled receptor 1 family.

Its subcellular location is the cell membrane. Odorant receptor. This chain is Olfactory receptor 10H5 (OR10H5), found in Homo sapiens (Human).